A 310-amino-acid chain; its full sequence is Alpha/beta hydrolase domain-containing protein 17A (310 aa).

Catalysis depends on charge relay system residues S190, D255, and H284. The residue at position 307 (S307) is a Phosphoserine.

The protein belongs to the AB hydrolase superfamily. ABHD17 family. In terms of processing, palmitoylated on cysteine residues located in a cysteine cluster at the N-terminus which promotes membrane localization. Palmitoylation is required for post-synaptic localization and for depalmitoylating activity towards DLG4/PSD95.

It localises to the cell membrane. The protein localises to the endosome membrane. The protein resides in the cell projection. It is found in the dendritic spine. Its subcellular location is the postsynaptic density membrane. It carries out the reaction S-hexadecanoyl-L-cysteinyl-[protein] + H2O = L-cysteinyl-[protein] + hexadecanoate + H(+). Functionally, hydrolyzes fatty acids from S-acylated cysteine residues in proteins. Has depalmitoylating activity towards NRAS. Has depalmitoylating activity towards DLG4/PSD95. May have depalmitoylating activity towards MAP6. This Bos taurus (Bovine) protein is Alpha/beta hydrolase domain-containing protein 17A.